The following is a 947-amino-acid chain: Bifunctional glutamine synthetase adenylyltransferase/adenylyl-removing enzyme (947 aa).

The tract at residues Met-1–Glu-440 is adenylyl removase. The segment at Ser-450–Val-947 is adenylyl transferase.

Belongs to the GlnE family. Mg(2+) serves as cofactor.

The catalysed reaction is [glutamine synthetase]-O(4)-(5'-adenylyl)-L-tyrosine + phosphate = [glutamine synthetase]-L-tyrosine + ADP. It catalyses the reaction [glutamine synthetase]-L-tyrosine + ATP = [glutamine synthetase]-O(4)-(5'-adenylyl)-L-tyrosine + diphosphate. Functionally, involved in the regulation of glutamine synthetase GlnA, a key enzyme in the process to assimilate ammonia. When cellular nitrogen levels are high, the C-terminal adenylyl transferase (AT) inactivates GlnA by covalent transfer of an adenylyl group from ATP to specific tyrosine residue of GlnA, thus reducing its activity. Conversely, when nitrogen levels are low, the N-terminal adenylyl removase (AR) activates GlnA by removing the adenylyl group by phosphorolysis, increasing its activity. The regulatory region of GlnE binds the signal transduction protein PII (GlnB) which indicates the nitrogen status of the cell. This Salmonella enteritidis PT4 (strain P125109) protein is Bifunctional glutamine synthetase adenylyltransferase/adenylyl-removing enzyme.